Consider the following 512-residue polypeptide: Mesoderm induction early response protein 1 (512 aa).

The segment covering 1–16 (MAEPSVESSSPGGSAT) has biased composition (low complexity). Disordered regions lie at residues 1–63 (MAEP…REGD) and 75–173 (YGST…EDYI). At Ser-10 the chain carries Phosphoserine. The segment covering 17–36 (SDDHEFDPSADMLVHDFDDE) has biased composition (basic and acidic residues). Composition is skewed to acidic residues over residues 37 to 46 (RTLEEEEMME) and 83 to 105 (EEDE…DNDD). A compositionally biased stretch (polar residues) spans 129–144 (QSSNDDPSQSVASQDA). Ser-141 carries the post-translational modification Phosphoserine. A Phosphotyrosine modification is found at Tyr-155. Ser-160 and Ser-166 each carry phosphoserine. Residues 160–173 (SEVEEESEEDEDYI) are compositionally biased toward acidic residues. An ELM2 domain is found at 180–278 (KEIMVGSMFQ…EALRRLRFNV (99 aa)). An interaction with HDAC1 region spans residues 180–284 (KEIMVGSMFQ…RFNVKAAREE (105 aa)). Lys-239 is covalently cross-linked (Glycyl lysine isopeptide (Lys-Gly) (interchain with G-Cter in SUMO2)). The SANT domain maps to 283–335 (EELSVWTEEECRNFEQGLKAYGKDFHLIQANKVRTRSVGECVAFYYMWKKSER). The disordered stretch occupies residues 366–512 (ESESAASSRA…KFEELENTDD (147 aa)). Residues Ser-367, Ser-369, and Ser-377 each carry the phosphoserine modification. The segment covering 396-409 (TVSTTNQNGVSSNG) has biased composition (polar residues). Residues 414–423 (LNKEEVKVEG) show a composition bias toward basic and acidic residues. A Glycyl lysine isopeptide (Lys-Gly) (interchain with G-Cter in SUMO2) cross-link involves residue Lys-420. Thr-448 carries the post-translational modification Phosphothreonine. Basic and acidic residues predominate over residues 462–475 (ARNENDFDEKSERP). Over residues 482 to 494 (NSNGKESPGSSEF) the composition is skewed to polar residues. Phosphoserine is present on residues Ser-483, Ser-488, and Ser-491.

As to quaternary structure, interacts with HDAC1. Part of a complex containing at least CDYL, MIER1, MIER2, HDAC1 and HDAC2.

It is found in the nucleus. Functionally, transcriptional repressor regulating the expression of a number of genes including SP1 target genes. Probably functions through recruitment of HDAC1 a histone deacetylase involved in chromatin silencing. The sequence is that of Mesoderm induction early response protein 1 (MIER1) from Pongo abelii (Sumatran orangutan).